The chain runs to 43 residues: Protein PsbN (43 aa).

Residues 5–27 (TLVAISISCLLVSFTGYALYTAF) form a helical membrane-spanning segment.

It belongs to the PsbN family.

Its subcellular location is the plastid. The protein resides in the chloroplast thylakoid membrane. Functionally, may play a role in photosystem I and II biogenesis. The sequence is that of Protein PsbN from Cedrus deodara (Deodar cedar).